The chain runs to 381 residues: Cytochrome b (381 aa).

Helical transmembrane passes span 34-54, 78-99, 114-134, and 179-199; these read FGSLLATCLALQIITGIFLAM, WLIRNMHANGASLFFMCIYLHI, WNTGIILLLLVMATAFVGYVL, and FFTFHFLLPFAITGLTAVHLL. Heme b is bound by residues histidine 84 and histidine 98. Positions 183 and 197 each coordinate heme b. Histidine 202 contributes to the a ubiquinone binding site. 4 helical membrane-spanning segments follow: residues 227–247, 289–309, 321–341, and 348–368; these read YKDLLGLILMLTFLLTLTLFS, LGGVLALLFSILILFLMPTLH, LTQILFWSLVADLLVLTWIGG, and FIIIGQVASTFYFLILLLLMP.

It belongs to the cytochrome b family. In terms of assembly, the cytochrome bc1 complex contains 3 respiratory subunits (MT-CYB, CYC1 and UQCRFS1), 2 core proteins (UQCRC1 and UQCRC2) and probably 6 low-molecular weight proteins. The cofactor is heme b.

The protein resides in the mitochondrion inner membrane. Functionally, component of the ubiquinol-cytochrome c reductase complex (complex III or cytochrome b-c1 complex) that is part of the mitochondrial respiratory chain. The b-c1 complex mediates electron transfer from ubiquinol to cytochrome c. Contributes to the generation of a proton gradient across the mitochondrial membrane that is then used for ATP synthesis. This Chelonia mydas (Green sea-turtle) protein is Cytochrome b (MT-CYB).